We begin with the raw amino-acid sequence, 214 residues long: 3-isopropylmalate dehydratase small subunit (214 aa).

This sequence belongs to the LeuD family. LeuD type 1 subfamily. As to quaternary structure, heterodimer of LeuC and LeuD.

It carries out the reaction (2R,3S)-3-isopropylmalate = (2S)-2-isopropylmalate. It participates in amino-acid biosynthesis; L-leucine biosynthesis; L-leucine from 3-methyl-2-oxobutanoate: step 2/4. Its function is as follows. Catalyzes the isomerization between 2-isopropylmalate and 3-isopropylmalate, via the formation of 2-isopropylmaleate. The chain is 3-isopropylmalate dehydratase small subunit from Nitrosococcus oceani (strain ATCC 19707 / BCRC 17464 / JCM 30415 / NCIMB 11848 / C-107).